Consider the following 337-residue polypeptide: UPF0252 protein PH1321 (337 aa).

A helical transmembrane segment spans residues 100–120 (IIGMLFLVFIILPAITSNLWS).

Belongs to the UPF0252 family.

It localises to the membrane. The chain is UPF0252 protein PH1321 from Pyrococcus horikoshii (strain ATCC 700860 / DSM 12428 / JCM 9974 / NBRC 100139 / OT-3).